A 698-amino-acid chain; its full sequence is Adhesion G protein-coupled receptor F4 (698 aa).

A signal peptide spans 1–19 (MKPWIAMVCCLVFFLTTEC). Residues 20 to 409 (SHSKPKTHRK…VKNTILNHIT (390 aa)) lie on the Extracellular side of the membrane. N61, N168, N213, N268, N290, N344, and N375 each carry an N-linked (GlcNAc...) asparagine glycan. Residues 250 to 401 (RISHSSSEHS…SILMSSKPVK (152 aa)) enclose the GAIN-B domain. 2 cysteine pairs are disulfide-bonded: C353/C380 and C368/C382. The tract at residues 353–401 (CVSWDPATGQWDESPCTVMSDINSTVKCRCRHTKAVTSFSILMSSKPVK) is GPS. The helical transmembrane segment at 410–430 (FIGLSISIFSLVLCLVIEAIV) threads the bilayer. The Cytoplasmic segment spans residues 431 to 444 (WSRVVVTEISYMRH). The chain crosses the membrane as a helical span at residues 445–465 (VCIVNIAVSLLTANVWFIIGS). The N-linked (GlcNAc...) asparagine glycan is linked to N466. Residues 466 to 486 (NFSANVQEDHKWCVAVTFLCH) lie on the Extracellular side of the membrane. Residues 487 to 507 (FFFLSLFFWMLFKALLIVYGI) traverse the membrane as a helical segment. Topologically, residues 508-518 (LVVFRRMMKSR) are cytoplasmic. The helical transmembrane segment at 519-539 (MMAIGFAIGYGCPLVIAVITV) threads the bilayer. The Extracellular segment spans residues 540–566 (TVTEPGEGYTRKDACWLNWNQTKALFA). N559 carries an N-linked (GlcNAc...) asparagine glycan. Residues 567-587 (FAIPALAIVAVNLLVVLAVAI) form a helical membrane-spanning segment. The Cytoplasmic portion of the chain corresponds to 588–611 (NTQRPLIGSSKSQDMAIVFRISKN). The helical transmembrane segment at 612–632 (VAILTPLLGLTWGFGLTTLLE) threads the bilayer. The Extracellular segment spans residues 633–635 (GVH). The helical transmembrane segment at 636-656 (LVFHIIFALLNAFQGFFILLF) threads the bilayer. Residues 657 to 698 (GTIMDHKIRDALRMRVSSLKGKSRAAEKVSLSPANGSRILNR) are Cytoplasmic-facing.

Belongs to the G-protein coupled receptor 2 family. Adhesion G-protein coupled receptor (ADGR) subfamily. In terms of tissue distribution, expressed in squamous epithelia.

It is found in the membrane. Orphan receptor. The protein is Adhesion G protein-coupled receptor F4 (Adgrf4) of Mus musculus (Mouse).